A 309-amino-acid chain; its full sequence is HPr kinase/phosphorylase (309 aa).

Catalysis depends on residues His-138 and Lys-159. 153–160 (GQSGVGKS) serves as a coordination point for ATP. Ser-160 serves as a coordination point for Mg(2+). The active-site Proton acceptor; for phosphorylation activity. Proton donor; for dephosphorylation activity is the Asp-177. An important for the catalytic mechanism of both phosphorylation and dephosphorylation region spans residues 201-210 (LEIRGLGIIN). Glu-202 provides a ligand contact to Mg(2+). Arg-243 is a catalytic residue. The interval 264–269 (PVRPGR) is important for the catalytic mechanism of dephosphorylation.

It belongs to the HPrK/P family. In terms of assembly, homohexamer. The cofactor is Mg(2+).

It carries out the reaction [HPr protein]-L-serine + ATP = [HPr protein]-O-phospho-L-serine + ADP + H(+). It catalyses the reaction [HPr protein]-O-phospho-L-serine + phosphate + H(+) = [HPr protein]-L-serine + diphosphate. Functionally, catalyzes the ATP- as well as the pyrophosphate-dependent phosphorylation of a specific serine residue in HPr, a phosphocarrier protein of the phosphoenolpyruvate-dependent sugar phosphotransferase system (PTS). HprK/P also catalyzes the pyrophosphate-producing, inorganic phosphate-dependent dephosphorylation (phosphorolysis) of seryl-phosphorylated HPr (P-Ser-HPr). The two antagonistic activities of HprK/P are regulated by several intracellular metabolites, which change their concentration in response to the absence or presence of rapidly metabolisable carbon sources (glucose, fructose, etc.) in the growth medium. Also phosphorylates/dephosphorylates the HPr-like catabolite repression protein crh on a specific serine residue. Therefore, by controlling the phosphorylation state of HPr and crh, HPrK/P is a sensor enzyme that plays a major role in the regulation of carbon metabolism and sugar transport: it mediates carbon catabolite repression (CCR), and regulates PTS-catalyzed carbohydrate uptake and inducer exclusion. In Bacillus cereus (strain G9842), this protein is HPr kinase/phosphorylase.